A 301-amino-acid polypeptide reads, in one-letter code: Bifunctional protein FolD (301 aa).

Residues Gly-166–Ser-168, Ser-191, and Ile-232 contribute to the NADP(+) site.

The protein belongs to the tetrahydrofolate dehydrogenase/cyclohydrolase family. In terms of assembly, homodimer.

It carries out the reaction (6R)-5,10-methylene-5,6,7,8-tetrahydrofolate + NADP(+) = (6R)-5,10-methenyltetrahydrofolate + NADPH. It catalyses the reaction (6R)-5,10-methenyltetrahydrofolate + H2O = (6R)-10-formyltetrahydrofolate + H(+). It functions in the pathway one-carbon metabolism; tetrahydrofolate interconversion. Catalyzes the oxidation of 5,10-methylenetetrahydrofolate to 5,10-methenyltetrahydrofolate and then the hydrolysis of 5,10-methenyltetrahydrofolate to 10-formyltetrahydrofolate. The polypeptide is Bifunctional protein FolD (Orientia tsutsugamushi (strain Ikeda) (Rickettsia tsutsugamushi)).